The following is a 477-amino-acid chain: MDGFYDQQVPYVVTNSQRGRNCTEKPTNVRKRKFINRDLAHDSEELFQDLSQLQETWLAEAQVPDNDEQFVPDYQAESLAFHGLPLKIKKEPHSPCSELGSACSQEQPFKFSYGEKCLYNVSAYDQKPQVGMRPSNPPTPSSTPVSPLHHASPNTAHTPKPDRAFPAHLPPSQSIPDSTYPMDHRFRRQLSEPCNSFPPLPTMPREGRPMYQRQMSEPNIPFPPQGFKQEYHDPVYEHTTMVGGAASQSFPPPLMIKQEPRDFAYDSEVPSCHSIYMRQEGFLAHPSRTEGCMFEKGPRQFYDDTCVVPEKFDGDIKQEPGMYREGPTYQRRGSLQLWQFLVALLDDPSNSHFIAWTGRGMEFKLIEPEEVARRWGIQKNRPAMNYDKLSRSLRYYYEKGIMQKVAGERYVYKFVCDPEALFSMAFPDNQRPLLKTDMERHINEEDTVPLSHFDESMTYMPEGGCCNPHPYNEGYVY.

S94 is modified (phosphoserine). Positions 128–179 are disordered; that stretch reads PQVGMRPSNPPTPSSTPVSPLHHASPNTAHTPKPDRAFPAHLPPSQSIPDST. Phosphoserine; by RPS6KA1 and RPS6KA5 occurs at positions 191 and 216. A Glycyl lysine isopeptide (Lys-Gly) (interchain with G-Cter in SUMO2) cross-link involves residue K317. Residues 335–415 constitute a DNA-binding region (ETS); sequence LQLWQFLVAL…AGERYVYKFV (81 aa).

This sequence belongs to the ETS family. In terms of processing, sumoylated. Phosphorylated at Ser-191 and Ser-216 by RPS6KA1 and RPS6KA5; phosphorylation activates transcriptional activity. In terms of tissue distribution, abundant in kidney. Moderate levels seen in the heart, brain, lung, embryo and lower levels seen in spleen, intestine, testis and thymus.

Its subcellular location is the nucleus. Transcriptional activator that binds to DNA sequences containing the consensus pentanucleotide 5'-CGGA[AT]-3'. Required for olfactory dopaminergic neuron differentiation; may directly activate expression of tyrosine hydroxylase (TH). The chain is ETS translocation variant 1 from Mus musculus (Mouse).